A 1711-amino-acid polypeptide reads, in one-letter code: Nuclear pore complex protein Nup214 (1711 aa).

8 consecutive repeat copies span residues F472–G473, F486–G487, F497–G498, F511–G512, F514–G515, F535–G536, T588–S589, and S598–L599. The interval F472 to G1703 is 45 X 2 AA repeats of F-G. Leucine-zipper stretches follow at residues L650–L672 and L767–L788. A disordered region spans residues K886 to D905. Residues F1009 to G1010 form repeat 9. The segment at G1012 to T1081 is disordered. Composition is skewed to basic and acidic residues over residues T1037 to K1051 and E1058 to N1072. The interval A1044–R1711 is interaction with emb. A run of 8 repeats spans residues F1075–G1076, F1077–G1078, F1097–G1098, F1106–G1107, F1135–G1136, F1218–G1219, F1229–G1230, and F1240–G1241. Positions T1251 to D1261 are enriched in polar residues. The tract at residues T1251 to I1270 is disordered. 27 repeat units span residues F1356–G1357, F1388–G1389, F1399–G1400, F1434–G1435, F1449–G1450, F1458–G1459, F1472–G1473, F1481–G1482, F1487–G1488, F1507–G1508, F1512–G1513, F1539–G1540, F1547–G1548, F1562–G1563, F1571–G1572, F1584–G1585, F1588–G1589, F1601–G1602, F1617–G1618, F1623–G1624, F1629–G1630, F1635–G1636, F1641–G1642, F1647–G1648, F1650–G1651, F1662–G1663, and F1686–G1687. 2 disordered regions span residues S1533–T1552 and S1557–P1614. Composition is skewed to gly residues over residues S1560 to G1572 and G1582 to S1595. Residues V1596–P1614 are compositionally biased toward low complexity. Positions N1688–Q1698 are enriched in polar residues. Residues N1688–R1711 are disordered. Residues F1702–G1703 form repeat 45.

As to quaternary structure, component of the nuclear pore complex. Interacts with mbo/Nup88 and (via C-terminus) with emb to attenuate emb-mediated protein export.

Its subcellular location is the nucleus. The protein localises to the nuclear pore complex. The protein resides in the nucleus membrane. Its function is as follows. Part of the nuclear pore complex. Serves as a docking site in the receptor-mediated import of substrates across the nuclear pore complex including emb, RanGAP and phosphorylated Mad. Protects mbo/Nup88 from proteasomal degradation at the nuclear pore. Together with mbo/Nup88, sequesters emb in the cytoplasm and thereby attenuates nuclear export signal (NES)-mediated nuclear export. Together with mbo/Nup88, required for the nuclear import of the Rel family transcription factors dorsal (dl) and Dorsal-related immunity factor (Dif) and the activation of an immune response. This chain is Nuclear pore complex protein Nup214, found in Drosophila melanogaster (Fruit fly).